The following is a 275-amino-acid chain: Large ribosomal subunit protein uL2 (275 aa).

Positions 224–275 (AMNPVDHPHGGGEGKAPIGHPGPLTPWGKPALGYKTRKKGKASDKFIVKRRK) are disordered. The segment covering 264-275 (KASDKFIVKRRK) has biased composition (basic and acidic residues).

The protein belongs to the universal ribosomal protein uL2 family. In terms of assembly, part of the 50S ribosomal subunit. Forms a bridge to the 30S subunit in the 70S ribosome.

One of the primary rRNA binding proteins. Required for association of the 30S and 50S subunits to form the 70S ribosome, for tRNA binding and peptide bond formation. It has been suggested to have peptidyltransferase activity; this is somewhat controversial. Makes several contacts with the 16S rRNA in the 70S ribosome. This Caldanaerobacter subterraneus subsp. tengcongensis (strain DSM 15242 / JCM 11007 / NBRC 100824 / MB4) (Thermoanaerobacter tengcongensis) protein is Large ribosomal subunit protein uL2.